Here is a 276-residue protein sequence, read N- to C-terminus: uncharacterized protein (276 aa).

Positions 1–29 (MKSHVRSFKTYIRDEIIKKGGWVNAHAHA) are cleaved as a signal peptide.

The protein belongs to the metallo-dependent hydrolases superfamily.

This is an uncharacterized protein from Haemophilus influenzae (strain ATCC 51907 / DSM 11121 / KW20 / Rd).